The primary structure comprises 812 residues: MDLENNTIHCSTFVQHTYIKLNPVGPIGAGRLPETRSVEEAQQYPTGWKFWLTILTMSALVVLGGLDTNIVATAVPSHASTRTPSPAASPLSPPATQRSSALTNRLTSVLSASYADSDIRDALETLSLRDIHNTPEVRRQLRLDVQKEVVDCNAEIVRDFGKVAEQLKRIGTVITSLNQTCDEMRKHISLARQDTAPVLEEASTLMNQKKEAETKQQLLDAFTKHFVVPDDDILVLTSLEDPINDQFFEVLARVKQVHRDCEALLGGENQRLGLELMDKSSRNLNSAYQKLYRWIQKEFKSLNLEDPRISSSIRRALRVLAERPSLFHSCLDFFAEARDYTLSDAFHYALTDAVSGTAGDSNVKPIEFSAHDPLRYIGDMLAWVHSTTVSEREALEALFVADGEELARGIQAGLSSEPWSRIDEHEEVAFDGQKALSDLVNRDLIGVSRALRQRVELVIQGHDDPVTCYKVVGLLSFYRTTFQKLLGPNSNLAELLVTLEKFTFGHFEALMKDVVSSLSTDHLALTPSEDLSTPQFLIDALEGLTSLMKTYEASFGADDTESTSDENRFTPVLRAAFDPFLELATSSAEELSNATARAIYLTNIHLTARTSVSEYSFVSTTHLNPISTKLSSLRIDLLEIQHRYLLDESGLQVLLTALEPFSPSSVAKSSTETEKQDSHPLESQPQQQPNLADIATLPAFQPEALIAVSQQLDDFLPSALMDATDNLKRLRSAAFVKSVTEEAVEAFCRDFEFVEGMIIGADEARGKVDVTRVDRGSETGAESEKGMEEGENGWGLRRLFPRTTGEIRVLLS.

Low complexity predominate over residues 77–96; that stretch reads SHASTRTPSPAASPLSPPAT. Disordered stretches follow at residues 77–100 and 665–688; these read SHAS…QRSS and SVAK…PQQQ. Residues 671–680 show a composition bias toward basic and acidic residues; the sequence is TETEKQDSHP.

The protein belongs to the COG6 family.

It localises to the golgi apparatus membrane. Acts as a component of the peripheral membrane COG complex that is involved in intra-Golgi protein trafficking. COG is located at the cis-Golgi, and regulates tethering of retrograde intra-Golgi vesicles and possibly a number of other membrane trafficking events. This Aspergillus oryzae (strain ATCC 42149 / RIB 40) (Yellow koji mold) protein is Conserved oligomeric Golgi complex subunit 6 (cog6).